Reading from the N-terminus, the 454-residue chain is tRNA(Ile)-lysidine synthase (454 aa).

ATP is bound at residue 31 to 36; the sequence is SGGADS.

Belongs to the tRNA(Ile)-lysidine synthase family.

Its subcellular location is the cytoplasm. The catalysed reaction is cytidine(34) in tRNA(Ile2) + L-lysine + ATP = lysidine(34) in tRNA(Ile2) + AMP + diphosphate + H(+). In terms of biological role, ligates lysine onto the cytidine present at position 34 of the AUA codon-specific tRNA(Ile) that contains the anticodon CAU, in an ATP-dependent manner. Cytidine is converted to lysidine, thus changing the amino acid specificity of the tRNA from methionine to isoleucine. This is tRNA(Ile)-lysidine synthase from Porphyromonas gingivalis (strain ATCC 33277 / DSM 20709 / CIP 103683 / JCM 12257 / NCTC 11834 / 2561).